The primary structure comprises 889 residues: DNA mismatch repair protein MutS (889 aa).

620 to 627 contributes to the ATP binding site; sequence GPNMAGKS. The interval 812–831 is disordered; it reads AAAPSGAARRGRPAREKEPG.

It belongs to the DNA mismatch repair MutS family.

In terms of biological role, this protein is involved in the repair of mismatches in DNA. It is possible that it carries out the mismatch recognition step. This protein has a weak ATPase activity. The chain is DNA mismatch repair protein MutS from Syntrophobacter fumaroxidans (strain DSM 10017 / MPOB).